Consider the following 509-residue polypeptide: Movement protein (509 aa).

It localises to the host cell junction. It is found in the host plasmodesma. The protein resides in the host cytoplasm. Transports viral genome to neighboring plant cells directly through plasmosdesmata, without any budding. The movement protein allows efficient cell to cell propagation, by bypassing the host cell wall barrier. The polypeptide is Movement protein (Rice dwarf virus (isolate Fujian) (RDV)).